Here is a 1370-residue protein sequence, read N- to C-terminus: MPTALTHEYRVRKNFGKIHKIIDIPNLIQMQKESYELFLQRDVPSEARSERGLQEVFKSVFPIEDFSGTASLEFVQYSFGEVKYEVEECLARGMTYEAPVKIVVRLVVYDVDKEAGTRSIRDIKEQEIYFGTLPLMTDNGTFIINGTERVIVSQLHRSPGIFFDHDRGKTHSSGKILYSARIIPLRGSWLDLEFDPKDILYIRIDRRRKFPVTVLLKALGYATEELLNYFYPSEKIFLKSEAQSEKELNPDILMGSRAPEDILHPQTGEVLIKKNRKLGKQALRRLQEVGINRLPMKSTELIGQVLAQDVIDYGTGEIVAECNDSIDADMLKEFVERGVGEIELLHLEGQDVSPSFRNTLLMDKVNTQEDALIEIYRRLRPSNPPTLEVATEFFNNLFFNPDHYDLSEVGRLKLNLQLGLEVPLDYRTLRKDDILMAVRQLIRLKDSQGPVDDIDNLGNRRVRAVGELLENQYRIGLVRMERAIKERMTLQEVEALMPHDLINAKPVSAVVKEFFGTSQLSQFMDQTNPLSEITHKRRLSALGPGGLTRERAGFEVRDVHPTHYGRICPIETPEGPNIGLIVSLSTYARVNPYGFIETPYRKVDGSSARKDVSYLTAMDEKEYPIAQANAPLDEKGRFLLDLVSARVAGEPVMVPPNEIRYMDVSPNQLVSVSASLIPFLEHDDANRALMGSNMQRQAVPLIQTRAPLVGTGIERIVAKDSGVAIVARRTGVVEYVDATRIVIRAIEDNGEMGSGVDIYKLIKFQRSNQNTCINQKPLVQHGDLVTKGQIIADGPSTDHGELALGRNVMVAFMSWGGYNFEDSILVSERIGKEDVFTSIHIEEFEVVARDTKLGKEDITRDIPNVGEEALKNLDESGIIRVGAYIKPNDILVGKVTPKGESQLTPEEKLLRAIFGEKASDVKDTSLRVPPGVEGIIIDAKVFSRKGVEKDERTKTIEDQEISRLMKDQRDELEIIFKSTVKRLAKLLENQVSDSAIKDGKKVYIKKGEVFTEEILLNLPSGHWDQLTVAKDPTVSMEIENILANYREQVQLVKSLFEEKIGKLKRGDELPPGVIKMVKVYVAVKRKLQVGDKMAGRHGNKGVVSRILPAEDMPYFPDGTPVDIVLNPLGVPSRMNVGQVLETHIGWAAKGIGMQLAQMLEECRERETMNEKLQRIYNKLEFGTYFKDASERELRGLIPDFKEGIHVASPVFDGAEEAEIRAFLSEAGVSETGQSVLYDGRTGMPFDQPVTVGVMYMLKLHHLVDDKIHARSIGPYSLVTQQPLGGKAQFGGQRLGEMEVWTMEAYGAAYALQEFLTVKSDDVAGRTRMYEKIVKGDNTLEAGLPESFNVLVKELQALALDVRLLEEEEGN.

This sequence belongs to the RNA polymerase beta chain family. The RNAP catalytic core consists of 2 alpha, 1 beta, 1 beta' and 1 omega subunit. When a sigma factor is associated with the core the holoenzyme is formed, which can initiate transcription.

The enzyme catalyses RNA(n) + a ribonucleoside 5'-triphosphate = RNA(n+1) + diphosphate. In terms of biological role, DNA-dependent RNA polymerase catalyzes the transcription of DNA into RNA using the four ribonucleoside triphosphates as substrates. This is DNA-directed RNA polymerase subunit beta from Syntrophobacter fumaroxidans (strain DSM 10017 / MPOB).